Here is a 146-residue protein sequence, read N- to C-terminus: Hemoglobin subunit beta (146 aa).

Val-1 is modified (N-acetylvaline). The region spanning 2–146 (HLTAEEKSAV…VATALAHKYH (145 aa)) is the Globin domain. A Phosphothreonine modification is found at Thr-12. Ser-44 carries the post-translational modification Phosphoserine. Lys-59 bears the N6-acetyllysine mark. His-63 contacts heme b. Lys-82 is subject to N6-acetyllysine. His-92 lines the heme b pocket. S-nitrosocysteine is present on Cys-93. At Lys-144 the chain carries N6-acetyllysine.

It belongs to the globin family. As to quaternary structure, heterotetramer of two alpha chains and two beta chains. Red blood cells.

Involved in oxygen transport from the lung to the various peripheral tissues. The polypeptide is Hemoglobin subunit beta (HBB) (Cebus albifrons (White-fronted capuchin)).